The chain runs to 519 residues: Bifunctional purine biosynthesis protein PurH (519 aa).

The MGS-like domain maps to 1 to 145; it reads MQPIQRALIS…KNHASVTVVV (145 aa).

The protein belongs to the PurH family.

The catalysed reaction is (6R)-10-formyltetrahydrofolate + 5-amino-1-(5-phospho-beta-D-ribosyl)imidazole-4-carboxamide = 5-formamido-1-(5-phospho-D-ribosyl)imidazole-4-carboxamide + (6S)-5,6,7,8-tetrahydrofolate. It catalyses the reaction IMP + H2O = 5-formamido-1-(5-phospho-D-ribosyl)imidazole-4-carboxamide. The protein operates within purine metabolism; IMP biosynthesis via de novo pathway; 5-formamido-1-(5-phospho-D-ribosyl)imidazole-4-carboxamide from 5-amino-1-(5-phospho-D-ribosyl)imidazole-4-carboxamide (10-formyl THF route): step 1/1. It functions in the pathway purine metabolism; IMP biosynthesis via de novo pathway; IMP from 5-formamido-1-(5-phospho-D-ribosyl)imidazole-4-carboxamide: step 1/1. The sequence is that of Bifunctional purine biosynthesis protein PurH from Allochromatium vinosum (strain ATCC 17899 / DSM 180 / NBRC 103801 / NCIMB 10441 / D) (Chromatium vinosum).